Consider the following 220-residue polypeptide: NADH-quinone oxidoreductase subunit I (220 aa).

2 consecutive 4Fe-4S ferredoxin-type domains span residues 71–102 (LQRL…IITH) and 112–141 (DSYT…MGNR). [4Fe-4S] cluster is bound by residues cysteine 82, cysteine 85, cysteine 88, cysteine 92, cysteine 121, cysteine 124, cysteine 127, and cysteine 131. Residues 187 to 220 (MQATPLDYVQEPSKEESQEETPTNPESNKGDENV) are disordered.

Belongs to the complex I 23 kDa subunit family. NDH-1 is composed of 14 different subunits. Subunits NuoA, H, J, K, L, M, N constitute the membrane sector of the complex. [4Fe-4S] cluster is required as a cofactor.

The protein resides in the cell inner membrane. It carries out the reaction a quinone + NADH + 5 H(+)(in) = a quinol + NAD(+) + 4 H(+)(out). NDH-1 shuttles electrons from NADH, via FMN and iron-sulfur (Fe-S) centers, to quinones in the respiratory chain. The immediate electron acceptor for the enzyme in this species is believed to be ubiquinone. Couples the redox reaction to proton translocation (for every two electrons transferred, four hydrogen ions are translocated across the cytoplasmic membrane), and thus conserves the redox energy in a proton gradient. This Helicobacter pylori (strain ATCC 700392 / 26695) (Campylobacter pylori) protein is NADH-quinone oxidoreductase subunit I.